A 569-amino-acid polypeptide reads, in one-letter code: CUE domain-containing protein 5 (569 aa).

The CUE domain occupies 17–60; sequence MAEKARATLKEAFPNTDDAIIRAVLAASGYKLEPAFNALLGLSD. Disordered regions lie at residues 67-139, 175-275, and 311-569; these read MEQA…DDYS, DGEE…SSSA, and EELE…GKET. Basic and acidic residues predominate over residues 79 to 100; sequence AAHDDPVQRQLEEDERCARELA. The segment covering 104–113 has biased composition (basic residues); sequence NSHRPERRRK. Residues 234 to 249 are compositionally biased toward basic and acidic residues; it reads SDPHMLNEKDFERLRL. The span at 250–274 shows a compositional bias: low complexity; that stretch reads ESSSSPMMRRSSLNSNRRSVESSSS. The span at 329–340 shows a compositional bias: basic and acidic residues; that stretch reads VVVEKKPDESRK. Over residues 347–364 the composition is skewed to polar residues; sequence ETVSEEQMGSSNAKSKVL. 3 stretches are compositionally biased toward basic and acidic residues: residues 367-381, 399-500, and 507-558; these read EPKD…KTET, ISEK…KETD, and KEEK…KIEE.

The protein localises to the cytoplasm. In Schizosaccharomyces pombe (strain 972 / ATCC 24843) (Fission yeast), this protein is CUE domain-containing protein 5.